A 496-amino-acid chain; its full sequence is UDP-N-acetylmuramoyl-L-alanyl-D-glutamate--2,6-diaminopimelate ligase (496 aa).

UDP-N-acetyl-alpha-D-muramoyl-L-alanyl-D-glutamate is bound at residue Ser32. 116–122 serves as a coordination point for ATP; that stretch reads GTNGKTT. UDP-N-acetyl-alpha-D-muramoyl-L-alanyl-D-glutamate is bound by residues 158-159, Ser185, Gln191, and Arg193; that span reads TT. N6-carboxylysine is present on Lys225. Meso-2,6-diaminopimelate is bound by residues Arg389, 413–416, Gly464, and Glu468; that span reads DNPR. The short motif at 413-416 is the Meso-diaminopimelate recognition motif element; sequence DNPR.

Belongs to the MurCDEF family. MurE subfamily. It depends on Mg(2+) as a cofactor. Post-translationally, carboxylation is probably crucial for Mg(2+) binding and, consequently, for the gamma-phosphate positioning of ATP.

Its subcellular location is the cytoplasm. It carries out the reaction UDP-N-acetyl-alpha-D-muramoyl-L-alanyl-D-glutamate + meso-2,6-diaminopimelate + ATP = UDP-N-acetyl-alpha-D-muramoyl-L-alanyl-gamma-D-glutamyl-meso-2,6-diaminopimelate + ADP + phosphate + H(+). It functions in the pathway cell wall biogenesis; peptidoglycan biosynthesis. Its function is as follows. Catalyzes the addition of meso-diaminopimelic acid to the nucleotide precursor UDP-N-acetylmuramoyl-L-alanyl-D-glutamate (UMAG) in the biosynthesis of bacterial cell-wall peptidoglycan. This Trichormus variabilis (strain ATCC 29413 / PCC 7937) (Anabaena variabilis) protein is UDP-N-acetylmuramoyl-L-alanyl-D-glutamate--2,6-diaminopimelate ligase.